The primary structure comprises 316 residues: Polyprenyl transferase ausN (316 aa).

The next 9 helical transmembrane spans lie at 45–65 (VVGV…TFLL), 69–89 (VILS…NDLI), 108–128 (GAVS…CGGS), 129–149 (LLLL…FFAL), 163–183 (LILT…DMNP), 188–208 (IPTL…DIVY), 233–253 (DQIA…GGIL), 256–276 (LGIP…LRFL), and 296–316 (SCLL…CVRL).

Belongs to the UbiA prenyltransferase family. Requires Mg(2+) as cofactor.

The protein resides in the membrane. It carries out the reaction 3,5-dimethylorsellinate + (2E,6E)-farnesyl diphosphate = (3R)-3-farnesyl-6-hydroxy-2,3,5-trimethyl-4-oxocyclohexa-1,5-diene-1-carboxylate + diphosphate + H(+). The protein operates within secondary metabolite biosynthesis; terpenoid biosynthesis. In terms of biological role, polyprenyl transferase; part of the gene cluster A that mediates the biosynthesis of the fungal meroterpenoid acetoxydehydroaustin. The first step of the pathway is the synthesis of 3,5-dimethylorsellinic acid by the polyketide synthase ausA. 3,5-dimethylorsellinic acid is then prenylated by the polyprenyl transferase ausN. Further epoxidation by the FAD-dependent monooxygenase ausM and cyclization by the probable terpene cyclase ausL lead to the formation of protoaustinoid A. Protoaustinoid A is then oxidized to spiro-lactone preaustinoid A3 by the combined action of the FAD-binding monooxygenases ausB and ausC, and the dioxygenase ausE. Acid-catalyzed keto-rearrangement and ring contraction of the tetraketide portion of preaustinoid A3 by ausJ lead to the formation of preaustinoid A4. The aldo-keto reductase ausK, with the help of ausH, is involved in the next step by transforming preaustinoid A4 into isoaustinone which is in turn hydroxylated by the P450 monooxygenase ausI to form austinolide. The cytochrome P450 monooxygenase ausG then modifies austinolide to austinol. Austinol is further acetylated to austin by the O-acetyltransferase ausP, which spontaneously changes to dehydroaustin. The cytochrome P450 monooxygenase then converts dehydroaustin is into 7-dehydrodehydroaustin. The hydroxylation catalyzed by ausR permits the second O-acetyltransferase ausQ to add an additional acetyl group to the molecule, leading to the formation of acetoxydehydroaustin. Due to genetic rearrangements of the clusters and the subsequent loss of some enzymes, the end product of the Penicillium brasilianum austinoid biosynthesis clusters is acetoxydehydroaustin. This is Polyprenyl transferase ausN from Penicillium brasilianum.